Consider the following 140-residue polypeptide: HTH-type transcriptional regulator LysM (140 aa).

The region spanning 4-67 (VDESDLKILE…ELENEIRAIV (64 aa)) is the HTH asnC-type domain. Positions 23–42 (YTSIAKELKISEAAVRKRIE) form a DNA-binding region, H-T-H motif.

In terms of assembly, homotetramer.

The protein localises to the cytoplasm. The protein operates within amino-acid biosynthesis; L-lysine biosynthesis via AAA pathway [regulation]. Functionally, in the absence or at low concentrations of lysine, activates the biosynthesis of this amino acid via the alpha-aminoadipate (AAA) pathway. In Sulfurisphaera tokodaii (strain DSM 16993 / JCM 10545 / NBRC 100140 / 7) (Sulfolobus tokodaii), this protein is HTH-type transcriptional regulator LysM (lysM).